The primary structure comprises 187 residues: Probable nicotinate-nucleotide adenylyltransferase (187 aa).

The protein belongs to the NadD family.

It catalyses the reaction nicotinate beta-D-ribonucleotide + ATP + H(+) = deamido-NAD(+) + diphosphate. It participates in cofactor biosynthesis; NAD(+) biosynthesis; deamido-NAD(+) from nicotinate D-ribonucleotide: step 1/1. In terms of biological role, catalyzes the reversible adenylation of nicotinate mononucleotide (NaMN) to nicotinic acid adenine dinucleotide (NaAD). This Agrobacterium fabrum (strain C58 / ATCC 33970) (Agrobacterium tumefaciens (strain C58)) protein is Probable nicotinate-nucleotide adenylyltransferase.